The sequence spans 2812 residues: Serine/threonine-protein kinase tel1 (2812 aa).

An FAT domain is found at Val-1773 to Asn-2347. The region spanning Phe-2449–Arg-2758 is the PI3K/PI4K catalytic domain. A G-loop region spans residues Phe-2455 to Ala-2461. The tract at residues Gly-2627–Asn-2635 is catalytic loop. The segment at His-2647–Thr-2671 is activation loop. A compositionally biased stretch (polar residues) spans Asn-2739 to Asp-2749. The disordered stretch occupies residues Asn-2739 to Gly-2763. The FATC domain occupies Ser-2780–Gln-2812.

The protein belongs to the PI3/PI4-kinase family. ATM subfamily. In terms of assembly, interacts with nbs1. This interaction is required for phosphorylation of histone H2A.

It localises to the nucleus. The protein localises to the chromosome. It is found in the telomere. It carries out the reaction L-seryl-[protein] + ATP = O-phospho-L-seryl-[protein] + ADP + H(+). The enzyme catalyses L-threonyl-[protein] + ATP = O-phospho-L-threonyl-[protein] + ADP + H(+). In terms of biological role, serine/threonine protein kinase which activates checkpoint signaling upon genotoxic stresses such as ionizing radiation (IR), ultraviolet light (UV), or DNA replication stalling, thereby acting as a DNA damage sensor. Recognizes the substrate consensus sequence [ST]-Q. Phosphorylates histone H2A to form H2AS128ph (gamma-H2A) at sites of DNA damage, involved in the regulation of DNA damage response mechanism. Undirectly involved in the phosphorylation of rad32 which is necessary for its telomere function. Required for the control of telomere length and genome stability. This chain is Serine/threonine-protein kinase tel1 (tel1), found in Schizosaccharomyces pombe (strain 972 / ATCC 24843) (Fission yeast).